The primary structure comprises 119 residues: Lamprin 1.8-10 (119 aa).

The signal sequence occupies residues 1 to 19; it reads MAATMQALLVIALLHLATA. 7 repeat units span residues 41–45, 46–50, 51–55, 56–60, 61–65, 66–70, and 86–90. The interval 41–90 is 7 X 5 AA approximate repeats; it reads GGLGYGGLGYGGLGYGGLGVAGLGYGGLGYPGAALGGAYTHHAALGGLGY.

As to quaternary structure, the polymeric lamprin chains self-aggregate to form fibers and have secondary structures particularly rich in beta-sheets and in beta-turns.

The protein localises to the secreted. Its subcellular location is the extracellular space. It localises to the extracellular matrix. In terms of biological role, self-aggregating protein that is part of the soluble form of lamprin. This is Lamprin 1.8-10 from Petromyzon marinus (Sea lamprey).